Consider the following 725-residue polypeptide: Manganese-exporting P-type ATPase (725 aa).

One can recognise an HMA domain in the interval 25 to 92 (GRMRIQIEWV…AISGAAHVAA (68 aa)). 6 helical membrane passes run 101-119 (HSSD…GAAA), 142-160 (LVAS…RGAL), 165-179 (TGTD…IASL), 188-202 (LAVL…YLQD), 335-359 (VGEN…AITK), and 365-383 (MTVL…TPTA). Asp416 acts as the 4-aspartylphosphate intermediate in catalysis. Mg(2+) is bound by residues Asp416, Thr418, and Asp618. 2 consecutive transmembrane segments (helical) span residues 669–688 (AVEV…AAGL) and 698–717 (PVLA…ANSS).

It belongs to the cation transport ATPase (P-type) (TC 3.A.3) family. Type IB subfamily.

It localises to the cell membrane. It carries out the reaction Mn(2+)(in) + ATP + H2O = Mn(2+)(out) + ADP + phosphate + H(+). Functionally, high affinity, slow turnover Mn(2+) transporting ATPase. This is Manganese-exporting P-type ATPase (ctpC) from Mycobacterium leprae (strain TN).